Reading from the N-terminus, the 430-residue chain is Serine--tRNA ligase (430 aa).

Residue Thr231–Glu233 participates in L-serine binding. Residue Arg262–Glu264 participates in ATP binding. Glu285 contributes to the L-serine binding site. Glu349–Ser352 contributes to the ATP binding site. Ser385 serves as a coordination point for L-serine.

This sequence belongs to the class-II aminoacyl-tRNA synthetase family. Type-1 seryl-tRNA synthetase subfamily. In terms of assembly, homodimer. The tRNA molecule binds across the dimer.

The protein localises to the cytoplasm. It catalyses the reaction tRNA(Ser) + L-serine + ATP = L-seryl-tRNA(Ser) + AMP + diphosphate + H(+). The enzyme catalyses tRNA(Sec) + L-serine + ATP = L-seryl-tRNA(Sec) + AMP + diphosphate + H(+). Its pathway is aminoacyl-tRNA biosynthesis; selenocysteinyl-tRNA(Sec) biosynthesis; L-seryl-tRNA(Sec) from L-serine and tRNA(Sec): step 1/1. Catalyzes the attachment of serine to tRNA(Ser). Is also able to aminoacylate tRNA(Sec) with serine, to form the misacylated tRNA L-seryl-tRNA(Sec), which will be further converted into selenocysteinyl-tRNA(Sec). The sequence is that of Serine--tRNA ligase from Ruegeria pomeroyi (strain ATCC 700808 / DSM 15171 / DSS-3) (Silicibacter pomeroyi).